The sequence spans 450 residues: Phosphoglucosamine mutase (450 aa).

Serine 102 acts as the Phosphoserine intermediate in catalysis. Mg(2+)-binding residues include serine 102, aspartate 244, aspartate 246, and aspartate 248. The residue at position 102 (serine 102) is a Phosphoserine.

The protein belongs to the phosphohexose mutase family. Requires Mg(2+) as cofactor. Post-translationally, activated by phosphorylation.

It catalyses the reaction alpha-D-glucosamine 1-phosphate = D-glucosamine 6-phosphate. In terms of biological role, catalyzes the conversion of glucosamine-6-phosphate to glucosamine-1-phosphate. This is Phosphoglucosamine mutase from Desulfovibrio desulfuricans (strain ATCC 27774 / DSM 6949 / MB).